The following is a 340-amino-acid chain: MNTEATQEKSNVNSTGERLRTAREQMGLTQQNVAERLCLKLSTIRDIEEDNSPASLASTFLRGYIRSYARLVHVPEEELLPMMAKQAPVRDAKVEMMQSYSLGKQRKKRDGWLMIFTWLVLFVVLGLTGAWWWQNHKAAQDDLVSMGDQNASVEEDGRQSIALSDDNANGGAQTAIPLDNKPATANNAPSSVTATSDNGTPAATAQSSQVTASNAAPAANAVNDNTPPVAVAPSQAATNSSAAAPLPTGSAAVSRPAADANAMMMTFSRDCWLDVTDATGKKLFSGIQRSGGKLSLAGKAPYHLKIGAPAAVQIEYQGKPVDLGRFIRTNQVARLTVGAP.

The Cytoplasmic segment spans residues 1 to 111 (MNTEATQEKS…LGKQRKKRDG (111 aa)). An HTH cro/C1-type domain is found at 19–79 (LRTAREQMGL…RLVHVPEEEL (61 aa)). The segment at residues 30–49 (QQNVAERLCLKLSTIRDIEE) is a DNA-binding region (H-T-H motif). Residues 112–132 (WLMIFTWLVLFVVLGLTGAWW) traverse the membrane as a helical; Signal-anchor for type II membrane protein segment. Topologically, residues 133 to 340 (WQNHKAAQDD…QVARLTVGAP (208 aa)) are periplasmic. Residues 162-252 (ALSDDNANGG…AAPLPTGSAA (91 aa)) are disordered. Residues 183–201 (ATANNAPSSVTATSDNGTP) are compositionally biased toward polar residues. Residues 202-233 (AATAQSSQVTASNAAPAANAVNDNTPPVAVAP) are compositionally biased toward low complexity.

It belongs to the RodZ family.

Its subcellular location is the cell inner membrane. In terms of biological role, cytoskeletal protein that is involved in cell-shape control through regulation of the length of the long axis. This chain is Cytoskeleton protein RodZ, found in Erwinia tasmaniensis (strain DSM 17950 / CFBP 7177 / CIP 109463 / NCPPB 4357 / Et1/99).